A 363-amino-acid polypeptide reads, in one-letter code: Protein-arginine kinase (363 aa).

The Phosphagen kinase C-terminal domain occupies 24–255 (IVLSSRIRLA…EQLIAQERAA (232 aa)). ATP-binding positions include 27–31 (SSRIR), His-92, Arg-126, 177–181 (RASVM), and 208–213 (RGTYGE). Residues 338 to 343 (RDVRRA) carry the RDXXRA motif of the pArg binding pocket involved in allosteric regulation motif.

It belongs to the ATP:guanido phosphotransferase family. As to quaternary structure, homodimer. Dimerization is important for full catalytic activity.

It carries out the reaction L-arginyl-[protein] + ATP = N(omega)-phospho-L-arginyl-[protein] + ADP + H(+). With respect to regulation, appears to be allosterically activated by the binding of pArg-containing polypeptides to the pArg-binding pocket localized in the C-terminal domain of McsB. Catalyzes the specific phosphorylation of arginine residues in a large number of proteins. Is part of the bacterial stress response system, where it is involved in regulating the global heat shock repressor CtsR; phosphorylates arginine residues in the winged helix-turn-helix domain of CtsR, thereby preventing its binding to DNA and consequently inducing the expression of repressed genes. Protein arginine phosphorylation has a physiologically important role and is involved in the regulation of many critical cellular processes, such as protein homeostasis, motility, competence, and stringent and stress responses, by regulating gene expression and protein activity. Acts exclusively on Arg residues, since it cannot phosphorylate Tyr, Ser, Thr, His, Asp and Lys. Has no free arginine kinase activity. This Geobacillus stearothermophilus (Bacillus stearothermophilus) protein is Protein-arginine kinase.